A 266-amino-acid chain; its full sequence is Uridylate kinase (266 aa).

Residue 26 to 29 (KLGG) participates in ATP binding. Residue G67 participates in UMP binding. Positions 68 and 72 each coordinate ATP. UMP contacts are provided by residues D87 and 148-155 (LGAPYFST). Y181 and D184 together coordinate ATP.

It belongs to the UMP kinase family. As to quaternary structure, homohexamer.

The protein resides in the cytoplasm. The catalysed reaction is UMP + ATP = UDP + ADP. The protein operates within pyrimidine metabolism; CTP biosynthesis via de novo pathway; UDP from UMP (UMPK route): step 1/1. With respect to regulation, inhibited by UTP. Functionally, catalyzes the reversible phosphorylation of UMP to UDP. In Acidothermus cellulolyticus (strain ATCC 43068 / DSM 8971 / 11B), this protein is Uridylate kinase.